Consider the following 520-residue polypeptide: Ribonuclease Y 2 (520 aa).

The chain crosses the membrane as a helical span at residues 7–23 (VVLLLASIGVGYGLRAK). A KH domain is found at 206 to 269 (NHRSFIAENA…AVAMETMEMI (64 aa)). The region spanning 332–425 (ILEHSIETAK…VEAADAISGA (94 aa)) is the HD domain.

The protein belongs to the RNase Y family.

The protein localises to the cell membrane. Endoribonuclease that initiates mRNA decay. This Pediococcus pentosaceus (strain ATCC 25745 / CCUG 21536 / LMG 10740 / 183-1w) protein is Ribonuclease Y 2.